We begin with the raw amino-acid sequence, 210 residues long: ATP-dependent Clp protease proteolytic subunit (210 aa).

Serine 111 serves as the catalytic Nucleophile. Residue histidine 136 is part of the active site.

This sequence belongs to the peptidase S14 family. Fourteen ClpP subunits assemble into 2 heptameric rings which stack back to back to give a disk-like structure with a central cavity, resembling the structure of eukaryotic proteasomes.

The protein resides in the cytoplasm. The enzyme catalyses Hydrolysis of proteins to small peptides in the presence of ATP and magnesium. alpha-casein is the usual test substrate. In the absence of ATP, only oligopeptides shorter than five residues are hydrolyzed (such as succinyl-Leu-Tyr-|-NHMec, and Leu-Tyr-Leu-|-Tyr-Trp, in which cleavage of the -Tyr-|-Leu- and -Tyr-|-Trp bonds also occurs).. Functionally, cleaves peptides in various proteins in a process that requires ATP hydrolysis. Has a chymotrypsin-like activity. Plays a major role in the degradation of misfolded proteins. This is ATP-dependent Clp protease proteolytic subunit from Halorhodospira halophila (strain DSM 244 / SL1) (Ectothiorhodospira halophila (strain DSM 244 / SL1)).